The following is a 146-amino-acid chain: Large ribosomal subunit protein uL15 (146 aa).

Residues 1 to 13 (MKLHELKPAEGSR) are compositionally biased toward basic and acidic residues. The interval 1–52 (MKLHELKPAEGSRKVRNRVGRGIGSGNGKTAGKGHKGQNARSGGGVRLGFEG) is disordered. 2 stretches are compositionally biased toward gly residues: residues 21–31 (RGIGSGNGKTA) and 42–52 (SGGGVRLGFEG).

This sequence belongs to the universal ribosomal protein uL15 family. In terms of assembly, part of the 50S ribosomal subunit.

Binds to the 23S rRNA. The sequence is that of Large ribosomal subunit protein uL15 from Bacillus anthracis (strain A0248).